The following is an 89-amino-acid chain: Large ribosomal subunit protein bL31B (89 aa).

It belongs to the bacterial ribosomal protein bL31 family. Type B subfamily. As to quaternary structure, part of the 50S ribosomal subunit.

In Corynebacterium urealyticum (strain ATCC 43042 / DSM 7109), this protein is Large ribosomal subunit protein bL31B.